The chain runs to 103 residues: Pyrimidine/purine nucleoside phosphorylase (103 aa).

The protein belongs to the nucleoside phosphorylase PpnP family.

It catalyses the reaction a purine D-ribonucleoside + phosphate = a purine nucleobase + alpha-D-ribose 1-phosphate. The catalysed reaction is adenosine + phosphate = alpha-D-ribose 1-phosphate + adenine. The enzyme catalyses cytidine + phosphate = cytosine + alpha-D-ribose 1-phosphate. It carries out the reaction guanosine + phosphate = alpha-D-ribose 1-phosphate + guanine. It catalyses the reaction inosine + phosphate = alpha-D-ribose 1-phosphate + hypoxanthine. The catalysed reaction is thymidine + phosphate = 2-deoxy-alpha-D-ribose 1-phosphate + thymine. The enzyme catalyses uridine + phosphate = alpha-D-ribose 1-phosphate + uracil. It carries out the reaction xanthosine + phosphate = alpha-D-ribose 1-phosphate + xanthine. Catalyzes the phosphorolysis of diverse nucleosides, yielding D-ribose 1-phosphate and the respective free bases. Can use uridine, adenosine, guanosine, cytidine, thymidine, inosine and xanthosine as substrates. Also catalyzes the reverse reactions. The sequence is that of Pyrimidine/purine nucleoside phosphorylase from Shewanella sp. (strain MR-4).